The chain runs to 473 residues: RuvB-like helicase 2 (473 aa).

ATP is bound at residue 76 to 83 (GPPSTGKT).

It belongs to the RuvB family. May form heterododecamers with RVB1. Component of the SWR1 chromatin remodeling complex, the INO80 chromatin remodeling complex, and of the R2TP complex.

The protein resides in the nucleus. The catalysed reaction is ATP + H2O = ADP + phosphate + H(+). In terms of biological role, DNA helicase which participates in several chromatin remodeling complexes, including the SWR1 and the INO80 complexes. The SWR1 complex mediates the ATP-dependent exchange of histone H2A for the H2A variant HZT1 leading to transcriptional regulation of selected genes by chromatin remodeling. The INO80 complex remodels chromatin by shifting nucleosomes and is involved in DNA repair. Also involved in pre-rRNA processing. In Gibberella zeae (strain ATCC MYA-4620 / CBS 123657 / FGSC 9075 / NRRL 31084 / PH-1) (Wheat head blight fungus), this protein is RuvB-like helicase 2 (RVB2).